We begin with the raw amino-acid sequence, 484 residues long: Glutamate--tRNA ligase (484 aa).

Positions 11–21 (PSPTGYLHIGN) match the 'HIGH' region motif. The short motif at 252–256 (KLSKR) is the 'KMSKS' region element. Lys-255 contributes to the ATP binding site.

The protein belongs to the class-I aminoacyl-tRNA synthetase family. Glutamate--tRNA ligase type 1 subfamily. In terms of assembly, monomer.

It is found in the cytoplasm. The catalysed reaction is tRNA(Glu) + L-glutamate + ATP = L-glutamyl-tRNA(Glu) + AMP + diphosphate. Functionally, catalyzes the attachment of glutamate to tRNA(Glu) in a two-step reaction: glutamate is first activated by ATP to form Glu-AMP and then transferred to the acceptor end of tRNA(Glu). This chain is Glutamate--tRNA ligase, found in Staphylococcus aureus (strain bovine RF122 / ET3-1).